The chain runs to 260 residues: Dolichol-phosphate mannosyltransferase subunit 1 (260 aa).

Residues 1 to 25 form a disordered region; that stretch reads MASTGASRSLAASPRPPQGRSSRQD. The residue at position 2 (Ala2) is an N-acetylalanine. 2 positions are modified to phosphoserine: Ser3 and Ser9. Residues Pro32, Tyr34, Glu36, Ile63, Asp65, Asp118, Ala119, Asp120, Arg147, Arg234, and Lys240 each contribute to the GDP-alpha-D-mannose site. Asp120 contacts Mg(2+). Asp120 serves as a coordination point for Mn(2+).

Belongs to the glycosyltransferase 2 family. Component of the dolichol-phosphate mannose (DPM) synthase complex composed of DPM1, DPM2 and DPM3; within the complex, directly interacts with DPM3. This interaction may stabilize DPM1. The cofactor is Mg(2+). Mn(2+) serves as cofactor. Ca(2+) is required as a cofactor.

It localises to the endoplasmic reticulum. It catalyses the reaction a di-trans,poly-cis-dolichyl phosphate + GDP-alpha-D-mannose = a di-trans,poly-cis-dolichyl beta-D-mannosyl phosphate + GDP. The protein operates within protein modification; protein glycosylation. Functionally, transfers mannose from GDP-mannose to dolichol monophosphate to form dolichol phosphate mannose (Dol-P-Man) which is the mannosyl donor in pathways leading to N-glycosylation, glycosyl phosphatidylinositol membrane anchoring, and O-mannosylation of proteins; catalytic subunit of the dolichol-phosphate mannose (DPM) synthase complex. In Mus musculus (Mouse), this protein is Dolichol-phosphate mannosyltransferase subunit 1 (Dpm1).